A 1057-amino-acid polypeptide reads, in one-letter code: Diacylglycerol kinase iota (1057 aa).

Residues 15 to 59 are compositionally biased toward low complexity; sequence AARGPARAPAAAAAAAASPPGPCSGAACAPSAAAGAGAMNPSSSA. 2 disordered regions span residues 15–74 and 334–358; these read AARG…SSGS and LKASNRKKKRTSFKRKASKRGMEQE. Over residues 337–352 the composition is skewed to basic residues; the sequence is SNRKKKRTSFKRKASK. In terms of domain architecture, DAGKc spans 372-507; the sequence is PLMKPLLVFV…DRWNLHVERN (136 aa). 2 ANK repeats span residues 950-979 and 986-1015; these read DHCSLLHYAAKTGNGEIVKYILDHGPSELL and TGETALHKAACQRNRAVCQLLVDAGASLRK. The segment covering 1014–1024 has biased composition (basic and acidic residues); that stretch reads RKTDSKGKTPQ. Positions 1014-1033 are disordered; it reads RKTDSKGKTPQERAQQAGDP. A PDZ-binding motif is present at residues 1055–1057; it reads TAV.

This sequence belongs to the eukaryotic diacylglycerol kinase family. As to quaternary structure, interacts (via PDZ-binding motif) with DLG4; controls the localization of DGKI to the synapse. Interacts (via PDZ-binding motif) with DLG1. Interacts (via PDZ-binding motif) with DLG2. Interacts (via PDZ-binding motif) with DLG3. May interact with RASGRP3; involved in the regulation of RASGRP3 activity. As to expression, specifically expressed in brain and retina. In brain, highly expressed in hippocampus, caudate nucleus, occipital pole, cerebral cortex, and cerebellum. Also detected in kidney.

The protein resides in the cell projection. Its subcellular location is the axon. It localises to the dendrite. The protein localises to the presynapse. It is found in the postsynapse. The protein resides in the postsynaptic density. Its subcellular location is the synaptic cell membrane. It localises to the cytoplasmic vesicle. The protein localises to the secretory vesicle. It is found in the synaptic vesicle membrane. The protein resides in the cytoplasm. Its subcellular location is the cytosol. It localises to the nucleus. The enzyme catalyses a 1,2-diacyl-sn-glycerol + ATP = a 1,2-diacyl-sn-glycero-3-phosphate + ADP + H(+). It carries out the reaction 1,2-di-(9Z-octadecenoyl)-sn-glycerol + ATP = 1,2-di-(9Z-octadecenoyl)-sn-glycero-3-phosphate + ADP + H(+). It catalyses the reaction 1-octadecanoyl-2-(5Z,8Z,11Z,14Z-eicosatetraenoyl)-sn-glycerol + ATP = 1-octadecanoyl-2-(5Z,8Z,11Z,14Z-eicosatetraenoyl)-sn-glycero-3-phosphate + ADP + H(+). The catalysed reaction is 1-octadecanoyl-2-(9Z,12Z)-octadecadienoyl-sn-glycerol + ATP = 1-octadecanoyl-2-(9Z,12Z-octadecadienoyl)-sn-glycero-3-phosphate + ADP + H(+). It functions in the pathway lipid metabolism; glycerolipid metabolism. Its function is as follows. Diacylglycerol kinase that converts diacylglycerol/DAG into phosphatidic acid/phosphatidate/PA and regulates the respective levels of these two bioactive lipids. Thereby, acts as a central switch between the signaling pathways activated by these second messengers with different cellular targets and opposite effects in numerous biological processes. Has probably no preference for any of the diacylglycerols in terms of the acyl chain composition, especially for the acyl chain at the sn-2 position. By controlling the diacylglycerol/DAG-mediated activation of RASGRP3, negatively regulates the Rap1 signaling pathway. May play a role in presynaptic diacylglycerol/DAG signaling and control neurotransmitter release during metabotropic glutamate receptor-dependent long-term depression. The sequence is that of Diacylglycerol kinase iota from Homo sapiens (Human).